We begin with the raw amino-acid sequence, 242 residues long: DNA repair protein RecO (242 aa).

It belongs to the RecO family.

Its function is as follows. Involved in DNA repair and RecF pathway recombination. The chain is DNA repair protein RecO from Dechloromonas aromatica (strain RCB).